The sequence spans 77 residues: Surfactant-associated protein 2 (77 aa).

Residues 1–19 (MESLMRLFLLLALLSSSHA) form the signal peptide. The N-linked (GlcNAc...) asparagine glycan is linked to N61.

Post-translationally, N-glycosylated. As to expression, expressed in lung, and specifically in alveolar type II epithelial cells.

The protein resides in the secreted. It localises to the cytoplasmic vesicle. Its subcellular location is the secretory vesicle. It is found in the golgi apparatus. Functionally, putative surfactant protein. This is Surfactant-associated protein 2 from Mus musculus (Mouse).